A 206-amino-acid chain; its full sequence is Large ribosomal subunit protein uL4 (206 aa).

The interval 46–77 is disordered; that stretch reads GTRAQKDREQVKHSTKKPFKQKGTGNARAGMT.

The protein belongs to the universal ribosomal protein uL4 family. In terms of assembly, part of the 50S ribosomal subunit.

Its function is as follows. One of the primary rRNA binding proteins, this protein initially binds near the 5'-end of the 23S rRNA. It is important during the early stages of 50S assembly. It makes multiple contacts with different domains of the 23S rRNA in the assembled 50S subunit and ribosome. Functionally, forms part of the polypeptide exit tunnel. The sequence is that of Large ribosomal subunit protein uL4 from Acidovorax ebreus (strain TPSY) (Diaphorobacter sp. (strain TPSY)).